Reading from the N-terminus, the 185-residue chain is HTH-type transcriptional regulator SAB2452 (185 aa).

An HTH tetR-type domain is found at 6–66 (IENRQRIEEI…YVIQRDLNTF (61 aa)). Residues 29 to 48 (SMNRIAKELGIGMGTLYRHF) constitute a DNA-binding region (H-T-H motif).

This chain is HTH-type transcriptional regulator SAB2452, found in Staphylococcus aureus (strain bovine RF122 / ET3-1).